We begin with the raw amino-acid sequence, 424 residues long: MFALADINSFYASCEKVFRPDLRNEPVIVLSNNDGCVIARSPEAKALGIRMGQPWFQVRQMRLEKKIHVFSSNYALYHSMSQRVMAVLESLSPAVEPYSIDEMFIDLRGINHCISPEFFGHQLREQVKSWTGLTMGVGIAPTKTLAKSAQWATKQWPQFSGVVALTAENRNRILKLLGLQPVGEVWGVGHRLTEKLNALGINTALQLAQANTAFIRKNFSVILERTVRELNGESCISLEEAPPAKQQIVCSRSFGERITDKDAMHQAVVQYAERAAEKLRGERQYCRQVTTFVRTSPFAVKEPCYSNAAVEKLPLPTQDSRDIIAAACRALNHVWREGYRYMKAGVMLADFTPSGIAQPGLFDEIQPRKNSEKLMKTLDELNQSGKGKVWFAGRGTAPEWQMKREMLSQCYTTKWRDIPLARLG.

A UmuC domain is found at 2–189 (FALADINSFY…QPVGEVWGVG (188 aa)).

Belongs to the DNA polymerase type-Y family.

In terms of biological role, involved in UV protection and mutation. This chain is Protein ImpB (impB), found in Salmonella typhimurium.